The primary structure comprises 213 residues: 3-demethoxyubiquinol 3-hydroxylase (213 aa).

Fe cation contacts are provided by Glu62, Glu92, His95, Glu144, Glu176, and His179.

Belongs to the COQ7 family. Requires Fe cation as cofactor.

Its subcellular location is the cell membrane. The enzyme catalyses a 5-methoxy-2-methyl-3-(all-trans-polyprenyl)benzene-1,4-diol + AH2 + O2 = a 3-demethylubiquinol + A + H2O. It functions in the pathway cofactor biosynthesis; ubiquinone biosynthesis. In terms of biological role, catalyzes the hydroxylation of 2-nonaprenyl-3-methyl-6-methoxy-1,4-benzoquinol during ubiquinone biosynthesis. The chain is 3-demethoxyubiquinol 3-hydroxylase from Psychrobacter sp. (strain PRwf-1).